A 125-amino-acid polypeptide reads, in one-letter code: Small ribosomal subunit protein uS13 (125 aa).

A disordered region spans residues 92–125; the sequence is RRHLPVHGQRTKTNARTRKGPKKTVAGKKKAGKK.

It belongs to the universal ribosomal protein uS13 family. Part of the 30S ribosomal subunit. Forms a loose heterodimer with protein S19. Forms two bridges to the 50S subunit in the 70S ribosome.

Functionally, located at the top of the head of the 30S subunit, it contacts several helices of the 16S rRNA. In the 70S ribosome it contacts the 23S rRNA (bridge B1a) and protein L5 of the 50S subunit (bridge B1b), connecting the 2 subunits; these bridges are implicated in subunit movement. Contacts the tRNAs in the A and P-sites. The chain is Small ribosomal subunit protein uS13 from Saccharopolyspora erythraea (strain ATCC 11635 / DSM 40517 / JCM 4748 / NBRC 13426 / NCIMB 8594 / NRRL 2338).